The primary structure comprises 291 residues: Acetyl-coenzyme A carboxylase carboxyl transferase subunit beta (291 aa).

Residues 23 to 291 form the CoA carboxyltransferase N-terminal domain; the sequence is VWHKCPSCTA…PPDLPVEESV (269 aa). Residues Cys-27, Cys-30, Cys-46, and Cys-49 each coordinate Zn(2+). The C4-type zinc-finger motif lies at 27 to 49; it reads CPSCTAVLYRVELERNLEVCPKC.

The protein belongs to the AccD/PCCB family. Acetyl-CoA carboxylase is a heterohexamer composed of biotin carboxyl carrier protein (AccB), biotin carboxylase (AccC) and two subunits each of ACCase subunit alpha (AccA) and ACCase subunit beta (AccD). The cofactor is Zn(2+).

Its subcellular location is the cytoplasm. The enzyme catalyses N(6)-carboxybiotinyl-L-lysyl-[protein] + acetyl-CoA = N(6)-biotinyl-L-lysyl-[protein] + malonyl-CoA. Its pathway is lipid metabolism; malonyl-CoA biosynthesis; malonyl-CoA from acetyl-CoA: step 1/1. Functionally, component of the acetyl coenzyme A carboxylase (ACC) complex. Biotin carboxylase (BC) catalyzes the carboxylation of biotin on its carrier protein (BCCP) and then the CO(2) group is transferred by the transcarboxylase to acetyl-CoA to form malonyl-CoA. This Coxiella burnetii (strain Dugway 5J108-111) protein is Acetyl-coenzyme A carboxylase carboxyl transferase subunit beta.